Reading from the N-terminus, the 376-residue chain is Flagellar P-ring protein (376 aa).

The N-terminal stretch at 1–29 (MTQRPFSLLSHLGRICLAAAMLAALPAQA) is a signal peptide.

This sequence belongs to the FlgI family. In terms of assembly, the basal body constitutes a major portion of the flagellar organelle and consists of four rings (L,P,S, and M) mounted on a central rod.

The protein resides in the periplasm. It localises to the bacterial flagellum basal body. In terms of biological role, assembles around the rod to form the L-ring and probably protects the motor/basal body from shearing forces during rotation. The polypeptide is Flagellar P-ring protein (Bordetella avium (strain 197N)).